The chain runs to 465 residues: Transcriptional protein swt1 (465 aa).

Residues 70 to 190 (GLFVLDTNFL…LLSDDKNLSI (121 aa)) enclose the PINc domain.

It belongs to the SWT1 family.

Its subcellular location is the cytoplasm. The protein localises to the nucleus. Its function is as follows. Involved in transcription. In Schizosaccharomyces pombe (strain 972 / ATCC 24843) (Fission yeast), this protein is Transcriptional protein swt1.